Here is a 168-residue protein sequence, read N- to C-terminus: Putative flavin-containing monooxygenase FMO GS-OX-like 11 (168 aa).

Residue 17–22 coordinates FAD; that stretch reads GAGAAG.

It belongs to the FMO family. FAD serves as cofactor.

Catalyzes the conversion of methylthioalkyl glucosinolates of any chain length into methylsulfinylalkyl glucosinolates. This chain is Putative flavin-containing monooxygenase FMO GS-OX-like 11, found in Arabidopsis thaliana (Mouse-ear cress).